The following is a 668-amino-acid chain: ATP-dependent RNA helicase MSS116, mitochondrial (668 aa).

A mitochondrion-targeting transit peptide spans 1–38 (MLKQLSRSLGIRSSPIVANLIRSKQVCTRGFHISLVKQ). Residues 87-115 (DFKGKGYIHDSIINSLHKNDFKELTPIQQ) carry the Q motif motif. The Helicase ATP-binding domain maps to 119–300 (VPIFNTEKGL…KKHIHPEYEF (182 aa)). 132–139 (AKTGTGKT) is an ATP binding site. Residues 242–245 (DEAD) carry the DEAD box motif. One can recognise a Helicase C-terminal domain in the interval 332–501 (SLSELHGIMK…NIIDQIESPL (170 aa)). Positions 585–668 (YSDFSRSGMS…EHRRIRDHDE (84 aa)) are disordered. The segment covering 586–597 (SDFSRSGMSQRP) has biased composition (polar residues). Positions 609-636 (NGRGKYGNNRNNDWSYQNKNRYNNNNNR) are enriched in low complexity. Positions 637–668 (QTERSYDSDRKSHNDWKYEKKFEHRRIRDHDE) are enriched in basic and acidic residues.

This sequence belongs to the DEAD box helicase family. DDX18/HAS1 subfamily.

The protein localises to the mitochondrion matrix. The catalysed reaction is ATP + H2O = ADP + phosphate + H(+). ATP-dependent RNA helicase required for mitochondrial splicing of group I and II introns. Also required for efficient mitochondrial translation. This Candida albicans (strain SC5314 / ATCC MYA-2876) (Yeast) protein is ATP-dependent RNA helicase MSS116, mitochondrial (MSS116).